The chain runs to 732 residues: Catalase-peroxidase (732 aa).

The tract at residues 1 to 26 (MDAKTDDQGGKCPFPHGGGSRGHRNR) is disordered. Positions 97–219 (WHSAGTYRTT…LGAVQMGLIY (123 aa)) form a cross-link, tryptophyl-tyrosyl-methioninium (Trp-Tyr) (with M-245). The active-site Proton acceptor is the histidine 98. The segment at residues 219–245 (YVNPEGPNGNPDPVAAAKDIRETFARM) is a cross-link (tryptophyl-tyrosyl-methioninium (Tyr-Met) (with W-97)). A heme b-binding site is contributed by histidine 260.

The protein belongs to the peroxidase family. Peroxidase/catalase subfamily. In terms of assembly, homodimer or homotetramer. The cofactor is heme b. Formation of the three residue Trp-Tyr-Met cross-link is important for the catalase, but not the peroxidase activity of the enzyme.

It carries out the reaction H2O2 + AH2 = A + 2 H2O. The catalysed reaction is 2 H2O2 = O2 + 2 H2O. Its function is as follows. Bifunctional enzyme with both catalase and broad-spectrum peroxidase activity. In Rhodopseudomonas palustris (strain BisB5), this protein is Catalase-peroxidase.